The sequence spans 408 residues: Probable pectate lyase 5 (408 aa).

The first 27 residues, 1–27 (MRMTLVHLSLSLFSCLLLVLSPTFIAS), serve as a signal peptide directing secretion. Asparagine 45 carries N-linked (GlcNAc...) asparagine glycosylation. Aspartate 206, aspartate 230, and aspartate 234 together coordinate Ca(2+). Arginine 286 is a catalytic residue.

This sequence belongs to the polysaccharide lyase 1 family. It depends on Ca(2+) as a cofactor.

The catalysed reaction is Eliminative cleavage of (1-&gt;4)-alpha-D-galacturonan to give oligosaccharides with 4-deoxy-alpha-D-galact-4-enuronosyl groups at their non-reducing ends.. It functions in the pathway glycan metabolism; pectin degradation; 2-dehydro-3-deoxy-D-gluconate from pectin: step 2/5. The protein is Probable pectate lyase 5 of Arabidopsis thaliana (Mouse-ear cress).